The following is a 120-amino-acid chain: Large ribosomal subunit protein bL19 (120 aa).

It belongs to the bacterial ribosomal protein bL19 family.

Functionally, this protein is located at the 30S-50S ribosomal subunit interface and may play a role in the structure and function of the aminoacyl-tRNA binding site. This chain is Large ribosomal subunit protein bL19 (rplS), found in Nostoc sp. (strain PCC 7120 / SAG 25.82 / UTEX 2576).